Consider the following 301-residue polypeptide: Ribonuclease H2 subunit A (301 aa).

M1 bears the N-acetylmethionine mark. The RNase H type-2 domain maps to 28–251 (PCVLGVDEAG…AQAILEKEAE (224 aa)). A divalent metal cation-binding residues include D34, E35, and D142. T217 carries the post-translational modification Phosphothreonine. Phosphoserine is present on S258.

Belongs to the RNase HII family. Eukaryotic subfamily. In terms of assembly, the RNase H2 complex is a heterotrimer composed of the catalytic subunit RNASEH2A and the non-catalytic subunits RNASEH2B and RNASEH2C. Requires Mn(2+) as cofactor. Mg(2+) serves as cofactor.

It is found in the nucleus. The catalysed reaction is Endonucleolytic cleavage to 5'-phosphomonoester.. Its function is as follows. Catalytic subunit of RNase HII, an endonuclease that specifically degrades the RNA of RNA:DNA hybrids. Participates in DNA replication, possibly by mediating the removal of lagging-strand Okazaki fragment RNA primers during DNA replication. Mediates the excision of single ribonucleotides from DNA:RNA duplexes. The sequence is that of Ribonuclease H2 subunit A (Rnaseh2a) from Rattus norvegicus (Rat).